The primary structure comprises 323 residues: 4-hydroxy-3-methylbut-2-enyl diphosphate reductase (323 aa).

Cys12 contacts [4Fe-4S] cluster. Residues His43 and His81 each coordinate (2E)-4-hydroxy-3-methylbut-2-enyl diphosphate. Dimethylallyl diphosphate is bound by residues His43 and His81. Positions 43 and 81 each coordinate isopentenyl diphosphate. Cys103 contacts [4Fe-4S] cluster. Residue His131 coordinates (2E)-4-hydroxy-3-methylbut-2-enyl diphosphate. Dimethylallyl diphosphate is bound at residue His131. His131 lines the isopentenyl diphosphate pocket. The Proton donor role is filled by Glu133. Thr170 lines the (2E)-4-hydroxy-3-methylbut-2-enyl diphosphate pocket. Position 198 (Cys198) interacts with [4Fe-4S] cluster. Ser226, Asn228, and Ser271 together coordinate (2E)-4-hydroxy-3-methylbut-2-enyl diphosphate. 3 residues coordinate dimethylallyl diphosphate: Ser226, Asn228, and Ser271. Residues Ser226, Asn228, and Ser271 each contribute to the isopentenyl diphosphate site.

Belongs to the IspH family. Requires [4Fe-4S] cluster as cofactor.

It catalyses the reaction isopentenyl diphosphate + 2 oxidized [2Fe-2S]-[ferredoxin] + H2O = (2E)-4-hydroxy-3-methylbut-2-enyl diphosphate + 2 reduced [2Fe-2S]-[ferredoxin] + 2 H(+). The enzyme catalyses dimethylallyl diphosphate + 2 oxidized [2Fe-2S]-[ferredoxin] + H2O = (2E)-4-hydroxy-3-methylbut-2-enyl diphosphate + 2 reduced [2Fe-2S]-[ferredoxin] + 2 H(+). It functions in the pathway isoprenoid biosynthesis; dimethylallyl diphosphate biosynthesis; dimethylallyl diphosphate from (2E)-4-hydroxy-3-methylbutenyl diphosphate: step 1/1. Its pathway is isoprenoid biosynthesis; isopentenyl diphosphate biosynthesis via DXP pathway; isopentenyl diphosphate from 1-deoxy-D-xylulose 5-phosphate: step 6/6. Functionally, catalyzes the conversion of 1-hydroxy-2-methyl-2-(E)-butenyl 4-diphosphate (HMBPP) into a mixture of isopentenyl diphosphate (IPP) and dimethylallyl diphosphate (DMAPP). Acts in the terminal step of the DOXP/MEP pathway for isoprenoid precursor biosynthesis. The chain is 4-hydroxy-3-methylbut-2-enyl diphosphate reductase from Lysinibacillus sphaericus (strain C3-41).